An 861-amino-acid chain; its full sequence is MKLSILEAAALTAASVVSAQDDLAYSPPYYPSPWADGHGEWSNAYKRAVDIVSQMTLTEKVNLTTGTGWELERCVGQTGSVPRLGIPSLCLQDSPLGIRMSDYNSAFPAGINVAATWDKKLAYQRGKAMGEEFSDKGIDVQLGPAAGPLGRSPDGGRNWEGFSPDPALTGVLFAETIKGIQDAGVIATAKHYILNEQEHFRQVGEAQGYGFNITETVSSNVDDKTMHELYLWPFADAVRAGVGAVMCSYNQINNSYGCQNSLTLNKLLKAELGFQGFVMSDWSAHHSGVGAALAGLDMSMPGDISFDSGTSFYGTNLTVGVLNGTIPQWRVDDMAVRIMAAYYKVGRDRLWTPPNFSSWTRDEYGFAHFFPSEGAYERVNEFVNVQRDHAQVIRRIGADSVVLLKNDGALPLTGQEKTVGILGEDAGSNPKGANGCSDRGCDKGTLAMAWGSGTANFPYLVTPEQAIQNEVLKGRGNVFAVTDNYDTQQIAAVASQSTVSLVFVNADAGEGFLNVDGNMGDRKNLTLWQNGEEVIKTVTEHCNNTVVVIHSVGPVLIDEWYAHPNVTGILWAGLPGQESGNAIADVLYGRVNPGGKTPFTWGKTRASYGDYLLTEPNNGNGAPQDNFNEGVFIDYRRFDKYNETPIYEFGHGLSYTTFELSGLQVQLINGSSYVPTTGQTSAAQAFGKVEDASSYLYPEGLKRISKFIYPWLNSTDLKASTGDPEYGEPNFEYIPEGATDGSPQPRLPASGGPGGNPGLYEDLFQVSVTITNTGKVAGDEVPQLYVSLGGPNEPKRVLRKFERLHIAPGQQKVWTTTLNRRDLANWDVVAQDWKITPYAKTIFVGTSSRKLPLAGRLPRVQ.

An N-terminal signal peptide occupies residues 1 to 19; the sequence is MKLSILEAAALTAASVVSA. N-linked (GlcNAc...) asparagine glycosylation is found at Asn-62, Asn-212, and Asn-253. Asp-281 is an active-site residue. 8 N-linked (GlcNAc...) asparagine glycosylation sites follow: Asn-316, Asn-323, Asn-355, Asn-524, Asn-543, Asn-565, Asn-669, and Asn-713. The tract at residues 735–754 is disordered; the sequence is PEGATDGSPQPRLPASGGPG.

This sequence belongs to the glycosyl hydrolase 3 family.

The protein resides in the secreted. The enzyme catalyses Hydrolysis of terminal, non-reducing beta-D-glucosyl residues with release of beta-D-glucose.. Its pathway is glycan metabolism; cellulose degradation. Beta-glucosidases are one of a number of cellulolytic enzymes involved in the degradation of cellulosic biomass. Catalyzes the last step releasing glucose from the inhibitory cellobiose. The polypeptide is Probable beta-glucosidase A (bglA) (Aspergillus terreus (strain NIH 2624 / FGSC A1156)).